The chain runs to 176 residues: Disulfide bond formation protein B (176 aa).

At 1–14 (MLRFLNQCSHGRGA) the chain is on the cytoplasmic side. Residues 15–31 (WLLMAFTALALELTALW) traverse the membrane as a helical segment. Residues 32–49 (FQHVMLLKPCVLCIYERC) are Periplasmic-facing. Cysteine 41 and cysteine 44 are joined by a disulfide. Residues 50–65 (ALFGVLGAALIGAIAP) form a helical membrane-spanning segment. Topologically, residues 66–71 (KTPLRY) are cytoplasmic. Residues 72–89 (VAMVIWLYSAFRGVQLTY) form a helical membrane-spanning segment. At 90-144 (EHTMLQLYPSPFATCDFMARFPEWLPLDKWVPQVFVASGDCAERQWEFLGLEMPQ) the chain is on the periplasmic side. Cysteine 104 and cysteine 130 are joined by a disulfide. Residues 145 to 163 (WLLGIFIAYLIVAVLVVIS) traverse the membrane as a helical segment. Residues 164–176 (QPFKAKKRDLFGR) are Cytoplasmic-facing.

It belongs to the DsbB family.

The protein resides in the cell inner membrane. In terms of biological role, required for disulfide bond formation in some periplasmic proteins. Acts by oxidizing the DsbA protein. The polypeptide is Disulfide bond formation protein B (Escherichia coli O6:K15:H31 (strain 536 / UPEC)).